A 235-amino-acid polypeptide reads, in one-letter code: Small ribosomal subunit protein uS3 (235 aa).

The region spanning 39–107 (VRKFLNKELA…PAQINIAEVK (69 aa)) is the KH type-2 domain. The tract at residues 215 to 235 (AQSEQQPADKPKKAPRGKGRK) is disordered.

The protein belongs to the universal ribosomal protein uS3 family. As to quaternary structure, part of the 30S ribosomal subunit. Forms a tight complex with proteins S10 and S14.

Its function is as follows. Binds the lower part of the 30S subunit head. Binds mRNA in the 70S ribosome, positioning it for translation. The chain is Small ribosomal subunit protein uS3 from Haemophilus influenzae (strain PittEE).